The chain runs to 247 residues: Type III pantothenate kinase (247 aa).

6-13 (DVGNTHTT) provides a ligand contact to ATP. 101-104 (GADR) is a substrate binding site. The Proton acceptor role is filled by aspartate 103. Aspartate 123 is a binding site for K(+). Threonine 126 lines the ATP pocket. Threonine 177 contacts substrate.

It belongs to the type III pantothenate kinase family. In terms of assembly, homodimer. NH4(+) is required as a cofactor. K(+) serves as cofactor.

It is found in the cytoplasm. It catalyses the reaction (R)-pantothenate + ATP = (R)-4'-phosphopantothenate + ADP + H(+). Its pathway is cofactor biosynthesis; coenzyme A biosynthesis; CoA from (R)-pantothenate: step 1/5. Catalyzes the phosphorylation of pantothenate (Pan), the first step in CoA biosynthesis. This chain is Type III pantothenate kinase, found in Thermosipho melanesiensis (strain DSM 12029 / CIP 104789 / BI429).